Reading from the N-terminus, the 199-residue chain is Ribonuclease HII (199 aa).

Residues 12-199 enclose the RNase H type-2 domain; sequence DLLAGTDEAG…FGPVKKILEG (188 aa). A divalent metal cation contacts are provided by D18, E19, and D110.

It belongs to the RNase HII family. Requires Mn(2+) as cofactor. Mg(2+) is required as a cofactor.

The protein resides in the cytoplasm. The catalysed reaction is Endonucleolytic cleavage to 5'-phosphomonoester.. In terms of biological role, endonuclease that specifically degrades the RNA of RNA-DNA hybrids. This chain is Ribonuclease HII, found in Marinomonas sp. (strain MWYL1).